The chain runs to 163 residues: Nucleotide-binding protein CGSHiGG_08790 (163 aa).

It belongs to the YajQ family.

In terms of biological role, nucleotide-binding protein. In Haemophilus influenzae (strain PittGG), this protein is Nucleotide-binding protein CGSHiGG_08790.